We begin with the raw amino-acid sequence, 235 residues long: Chalcone--flavanone isomerase 2 (235 aa).

Residues Thr-50 and Ser-192 each contribute to the substrate site.

It belongs to the chalcone isomerase family.

The catalysed reaction is a chalcone = a flavanone.. It participates in secondary metabolite biosynthesis; flavonoid biosynthesis. Its function is as follows. Catalyzes the intramolecular cyclization of bicyclic chalcones into tricyclic (S)-flavanones. Responsible for the isomerization of 4,2',4',6'-tetrahydroxychalcone (also termed chalcone) into naringenin. This is Chalcone--flavanone isomerase 2 (CHI2) from Chrysanthemum morifolium (Florist's daisy).